A 225-amino-acid chain; its full sequence is RNA chaperone ProQ (225 aa).

The tract at residues 103 to 173 is disordered; that stretch reads LEEAKARVQT…APREERHTPV (71 aa). Over residues 109–118 the composition is skewed to low complexity; the sequence is RVQTQRAAQQ. The span at 137–146 shows a compositional bias: basic residues; that stretch reads RERKPRPQQP. A compositionally biased stretch (basic and acidic residues) spans 147-156; the sequence is RRKEGAEQRK.

Belongs to the ProQ family.

The protein localises to the cytoplasm. Its function is as follows. RNA chaperone with significant RNA binding, RNA strand exchange and RNA duplexing activities. May regulate ProP activity through an RNA-based, post-transcriptional mechanism. This is RNA chaperone ProQ from Klebsiella pneumoniae (strain 342).